A 235-amino-acid polypeptide reads, in one-letter code: Tetraspanin-8 (235 aa).

Over 1–12 (MAGVSSCLKYSM) the chain is Cytoplasmic. Residues 13 to 33 (FFFNFLFWVCGTLILGLAIWV) form a helical membrane-spanning segment. The Extracellular portion of the chain corresponds to 34-52 (RVSKDGKEIITSGDSSTNP). The chain crosses the membrane as a helical span at residues 53–73 (FIAVNILIAVGSIIMVLGFLG). Residues 74–84 (CCGAVKESRCM) lie on the Cytoplasmic side of the membrane. A helical transmembrane segment spans residues 85–105 (LLLFFIGLLLILILQVAAGIL). Residues 106 to 203 (GAAFKPEYNR…SLIKDLFEKN (98 aa)) are Extracellular-facing. N118 carries N-linked (GlcNAc...) asparagine glycosylation. Residues 204–224 (IIIVIGIAFGLAVIEILGLVF) form a helical membrane-spanning segment. At 225 to 235 (SMVLYCQIGSK) the chain is on the cytoplasmic side.

It belongs to the tetraspanin (TM4SF) family. In terms of assembly, forms homooligomers. Interacts with MEP1B. Interacts with integrin alpha3/ITGA3. Interacts with RICTOR and MTOR. Interacts with ADAM17. Interacts with ECE1.

The protein localises to the cell membrane. In terms of biological role, structural component of specialized membrane microdomains known as tetraspanin-enriched microdomains (TERMs), which act as platforms for receptor clustering and signaling. Participates thereby in diverse biological functions such as cell signal transduction, migration and protein trafficking. Promotes ADAM17-mediated TNF-alpha processing through recruitment of ADAM17 to tetraspanin-enriched micro-domains (TEMs). Forms a complex with RICTOR and integrin alpha3/ITGA3 to mediate mTORC2 activation and AKT1 phosphorylation leading to cell migration. Reduces apoptosis and autophagy induced by high glucose levels through forming a complex with mTOR and RICTOR. Contributes to the maintenance of intestinal epithelial barrier and plays a role in the regulation of intestine inflammation by switching interferon gamma receptor 1/IFNGR1 from clathrin-dependent to lipid raft-dependent endocytosis route to limit STAT1 activation magnitude and duration. Acts as a modulator of the endothelin axis by associating with endothelin converting enzyme ECE1 and regulating its activity of conversion of the endothelin-1 precursor to endothelin. This is Tetraspanin-8 (Tspan8) from Mus musculus (Mouse).